The sequence spans 338 residues: Lipoate-protein ligase A (338 aa).

In terms of domain architecture, BPL/LPL catalytic spans 29–216; it reads PATQRVLFLW…AFFAHYGERV (188 aa). ATP contacts are provided by residues Arg-71, 76–79, and Lys-134; that span reads GAVF. Lys-134 provides a ligand contact to (R)-lipoate.

The protein belongs to the LplA family. Monomer.

Its subcellular location is the cytoplasm. The catalysed reaction is L-lysyl-[lipoyl-carrier protein] + (R)-lipoate + ATP = N(6)-[(R)-lipoyl]-L-lysyl-[lipoyl-carrier protein] + AMP + diphosphate + H(+). It functions in the pathway protein modification; protein lipoylation via exogenous pathway; protein N(6)-(lipoyl)lysine from lipoate: step 1/2. It participates in protein modification; protein lipoylation via exogenous pathway; protein N(6)-(lipoyl)lysine from lipoate: step 2/2. Catalyzes both the ATP-dependent activation of exogenously supplied lipoate to lipoyl-AMP and the transfer of the activated lipoyl onto the lipoyl domains of lipoate-dependent enzymes. The sequence is that of Lipoate-protein ligase A from Escherichia coli O139:H28 (strain E24377A / ETEC).